A 1159-amino-acid polypeptide reads, in one-letter code: MSIRFVYGRSGTGKSKFCIDEIKNNIDKKLDFNKLILLVPEQYTFMTENKILHEIGENAFFRTEVLSFKKMAHNIFEEYGGRVKEIIKESGRNMLIHRVINENIEFLDYFNRMSREQGFNEIISEVISEFKKYNISIDSIRAIDEKINDAELYQKVKELMIIYEAFNLKMHENYIDGDDELTLLDKKLLESSAYVDSEVWIDEFTSFTPQQLDIIKVLAKRCRRVNITFCIDNKSLNNNSEDITDVFNIIKSTENKILKIMKENNIAYDKPVNLNNAIPYRFKGNLELDHIEKYFFSYPFNEYDKNPESITLYKASNIYDEIERVSKSITSLVRENGYRYRDISVVCRNIDDYEKIISVIFKDYNIPYFLDKKIQLLSNPLIVLISSAFEILLKNWSYESVFKYLKSGLTGIDNSYIDRLENFILEYGVKGYKWTSKEIVNEKWFRGNGELTDDKVLIAEIMEEIRYPLMTFHNKVNGKHKVKDICSAIYEFLVDVKVFDRINEWIKNFEELGLEDKVKEYSQVESIVIDIIDQAVDVIGEERLEYSEFFRILSSGFANEEIGIIPVALDQVNIGDIARIKGRDVKVLYIVGINDGVLPASKKEEGLLSDRDRTTLGEVGINLSSTTRNKVFEEQYLLYMALTISSEYLMLSYPMADFEGKSLRPSIVISRIKKIFPNLIEESAIYDLKILENKFGKIIAPIPTFNELIISMRKDFDKEYIEPYWSEVYEWFKNNDEFRDKVKNIFKGLSYSNIGDKVSKNKLRKLYQNDLEKLVFSVSKLEKYAECPFSYFVQYGLKAKNRKVYEFTPPDLGSFVHEMLDSFTNKVREDGVLWSDLSNEKCKEIISNLIDKKLMDESNSILNSTKKFKYLAQRFKRVISKSVSVIASQIGKGEFEVFKTEFDFGSYSSGEAITLDLNDNEKVYLQGRIDRIDKLDLDGETYIRIIDYKTGAKKFDLNEIYYGLQVQLLVYLDALIKNSKYILDKQVKPGAILYFKIDDPIIKSKKEMTDEEVEKEVLSALKMKGLVLKDARVVKAMDKDIEGYSLVIPASFKADGGFKATSDVVTEEEFRILREYVNRKMIEICEEMLSGDIKIQPTKNSNIAHCEYCDFSSICQFDTEIKDNKYKIIINKSTNDIWNNIKKEIDNSNKLIKVENEEV.

The region spanning methionine 1–valine 401 is the UvrD-like helicase ATP-binding domain. Glycine 8–serine 15 lines the ATP pocket. In terms of domain architecture, UvrD-like helicase C-terminal spans proline 279–glycine 582. Cysteine 787, cysteine 1106, cysteine 1109, and cysteine 1115 together coordinate [4Fe-4S] cluster.

Belongs to the helicase family. AddB/RexB type 1 subfamily. As to quaternary structure, heterodimer of AddA and AddB. It depends on Mg(2+) as a cofactor. The cofactor is [4Fe-4S] cluster.

The heterodimer acts as both an ATP-dependent DNA helicase and an ATP-dependent, dual-direction single-stranded exonuclease. Recognizes the chi site generating a DNA molecule suitable for the initiation of homologous recombination. The AddB subunit has 5' -&gt; 3' nuclease activity but not helicase activity. In Clostridium beijerinckii (strain ATCC 51743 / NCIMB 8052) (Clostridium acetobutylicum), this protein is ATP-dependent helicase/deoxyribonuclease subunit B.